The sequence spans 258 residues: Phosphoribosylaminoimidazole-succinocarboxamide synthase (258 aa).

It belongs to the SAICAR synthetase family.

It catalyses the reaction 5-amino-1-(5-phospho-D-ribosyl)imidazole-4-carboxylate + L-aspartate + ATP = (2S)-2-[5-amino-1-(5-phospho-beta-D-ribosyl)imidazole-4-carboxamido]succinate + ADP + phosphate + 2 H(+). Its pathway is purine metabolism; IMP biosynthesis via de novo pathway; 5-amino-1-(5-phospho-D-ribosyl)imidazole-4-carboxamide from 5-amino-1-(5-phospho-D-ribosyl)imidazole-4-carboxylate: step 1/2. This Rhizorhabdus wittichii (strain DSM 6014 / CCUG 31198 / JCM 15750 / NBRC 105917 / EY 4224 / RW1) (Sphingomonas wittichii) protein is Phosphoribosylaminoimidazole-succinocarboxamide synthase.